The following is a 323-amino-acid chain: Galectin-4 (323 aa).

Galectin domains are found at residues Tyr19 to Ile150 and Tyr194 to Ile323. Trp256 to Lys262 lines the a beta-D-galactoside pocket.

As to quaternary structure, monomer.

In terms of biological role, galectin that binds lactose and a related range of sugars. May be involved in the assembly of adherens junctions. This chain is Galectin-4 (LGALS4), found in Sus scrofa (Pig).